The following is a 464-amino-acid chain: Properdin (464 aa).

Residues 1–22 (MPAEMQAPQWLLLLLVILPATG) form the signal peptide. TSP type-1 domains follow at residues 24 to 72 (DPVL…QACR), 73 to 130 (SPQW…PCCP), 132 to 187 (MGGW…KTCP), 189 to 251 (HGAW…PPCP), 253 to 309 (AGGW…VPCP), 311 to 372 (NGEW…HNCI), and 374 to 457 (KGSW…PVCK). Intrachain disulfides connect Cys28–Cys52, Cys39–Cys68, and Cys53–Cys71. Trp79 and Trp82 each carry a C-linked (Man) tryptophan glycan. 7 disulfides stabilise this stretch: Cys85/Cys123, Cys89/Cys129, Cys100/Cys107, Cys128/Cys166, Cys144/Cys180, Cys148/Cys186, and Cys159/Cys170. C-linked (Man) tryptophan glycosylation is found at Trp135, Trp138, and Trp141. Residue Thr147 is glycosylated (O-linked (Fuc...) threonine). C-linked (Man) tryptophan glycosylation is found at Trp192, Trp195, and Trp198. 3 cysteine pairs are disulfide-bonded: Cys201/Cys244, Cys205/Cys250, and Cys220/Cys234. Ser204 carries an O-linked (Fuc...) serine glycan. C-linked (Man) tryptophan glycosylation is found at Trp256 and Trp259. 3 disulfide bridges follow: Cys265/Cys302, Cys269/Cys308, and Cys280/Cys292. A glycan (O-linked (Fuc...) threonine) is linked at Thr268. 2 C-linked (Man) tryptophan glycosylation sites follow: Trp317 and Trp320. Intrachain disulfides connect Cys323-Cys365, Cys332-Cys371, and Cys345-Cys355. Positions 346–354 (GGRKFNGKP) are interaction with Complement C3 beta chain. C-linked (Man) tryptophan glycosylation is found at Trp377, Trp380, and Trp383. Cystine bridges form between Cys386–Cys450, Cys390–Cys456, and Cys402–Cys434. Asn423 carries N-linked (GlcNAc...) asparagine glycosylation.

As to quaternary structure, in plasma, properdin exists as dimers, trimers or tetramers in the relative proportions of 26:54:20. Interacts with the pro-C3-convertase enzyme complex (C3b-Bb) comprised of Complement C3 beta chain (C3b) and the Complement factor B Bb fragment (Bb), where it binds (via its TSP type-1 5 domain) with C3b and Bb. This interaction stabilizes the complex and allows it to become the active C3-convertase enzyme complex (C3b-Bb-FP). Interacts with C3b. Interacts with CFB.

The protein resides in the secreted. Its function is as follows. A positive regulator of the alternate pathway of complement. It binds to and stabilizes the C3- and C5-convertase enzyme complexes. Inhibits CFI-CFH mediated degradation of Inhibits CFI-CFH mediated degradation of Complement C3 beta chain (C3b). This is Properdin (Cfp) from Mus musculus (Mouse).